Consider the following 320-residue polypeptide: Arabinan endo-1,5-alpha-L-arabinosidase C (320 aa).

An N-terminal signal peptide occupies residues 1 to 15; sequence MKLALSLFLLSGSLA. The active-site Proton acceptor is the aspartate 31. 2 N-linked (GlcNAc...) asparagine glycosylation sites follow: asparagine 126 and asparagine 190. Catalysis depends on glutamate 198, which acts as the Proton donor.

Belongs to the glycosyl hydrolase 43 family.

The protein localises to the secreted. It carries out the reaction Endohydrolysis of (1-&gt;5)-alpha-arabinofuranosidic linkages in (1-&gt;5)-arabinans.. It functions in the pathway glycan metabolism; L-arabinan degradation. Endo-1,5-alpha-L-arabinanase involved in degradation of pectin. Its preferred substrate is linear 1,5-alpha-L-arabinan. This chain is Arabinan endo-1,5-alpha-L-arabinosidase C (abnC), found in Emericella nidulans (strain FGSC A4 / ATCC 38163 / CBS 112.46 / NRRL 194 / M139) (Aspergillus nidulans).